We begin with the raw amino-acid sequence, 88 residues long: UPF0297 protein SPCG_0205 (88 aa).

This sequence belongs to the UPF0297 family.

This chain is UPF0297 protein SPCG_0205, found in Streptococcus pneumoniae (strain CGSP14).